Here is a 61-residue protein sequence, read N- to C-terminus: uncharacterized protein (61 aa).

Residues 1–20 (MSSTTSTINLSSLGSAINDV) lie on the Extracellular side of the membrane. Residues 21–41 (LNIIVQYLPVFVTVAVLFGII) form a helical membrane-spanning segment. Residues 42–61 (TYMTGGLGGLFSGITGIFGS) lie on the Cytoplasmic side of the membrane.

Its subcellular location is the host membrane. This is an uncharacterized protein from Acidianus filamentous virus 2 (isolate Italy/Pozzuoli) (AFV-2).